The sequence spans 139 residues: Ubiquitin-conjugating enzyme spm2 (139 aa).

Residues proline 5 to phenylalanine 139 form the UBC core domain.

It belongs to the ubiquitin-conjugating enzyme family. As to quaternary structure, heterodimer with ubc13.

Its function is as follows. Has a role in the DNA error-free postreplication repair (PRR) pathway. Lacks catalytic activity by itself. The ubc13/spm2 heterodimer catalyzes the synthesis of non-canonical poly-ubiquitin chains that are linked through 'Lys-63'. The protein is Ubiquitin-conjugating enzyme spm2 (spm2) of Schizosaccharomyces pombe (strain 972 / ATCC 24843) (Fission yeast).